We begin with the raw amino-acid sequence, 35 residues long: Alpha-amanitin proprotein 1 (35 aa).

Positions 1–10 (MSDINATRLP) are excised as a propeptide. Isoleucine 11 is subject to (3R,4R)-4,5-dihydroxyisoleucine; in form alpha-amanitin. At isoleucine 11 the chain carries (3R,4S)-4-hydroxyisoleucine; in form gamma-amanitin. Positions 11–18 (IWGIGCNP) form a cross-link, cyclopeptide (Ile-Pro). Positions 12–16 (WGIGC) form a cross-link, 2'-cysteinyl-6'-hydroxytryptophan sulfoxide (Trp-Cys). Proline 18 carries the 4-hydroxyproline modification. A propeptide spanning residues 19–35 (CVGDDVTSVLTRGEALC) is cleaved from the precursor.

This sequence belongs to the MSDIN fungal toxin family. Processed by the macrocyclase-peptidase enzyme POPB to yield a toxic cyclic octapeptide. POPB first removes 10 residues from the N-terminus. Conformational trapping of the remaining peptide forces the enzyme to release this intermediate rather than proceed to macrocyclization. The enzyme rebinds the remaining peptide in a different conformation and catalyzes macrocyclization of the N-terminal 8 residues. In terms of tissue distribution, expressed in basidiocarps.

Its function is as follows. Major toxin belonging to the bicyclic octapeptides amatoxins that acts by binding non-competitively to RNA polymerase II and greatly slowing the elongation of transcripts from target promoters. This is Alpha-amanitin proprotein 1 from Amanita exitialis (Guangzhou destroying angel).